The chain runs to 130 residues: Small ribosomal subunit protein uS11 (130 aa).

It belongs to the universal ribosomal protein uS11 family. Part of the 30S ribosomal subunit. Interacts with proteins S7 and S18. Binds to IF-3.

Functionally, located on the platform of the 30S subunit, it bridges several disparate RNA helices of the 16S rRNA. Forms part of the Shine-Dalgarno cleft in the 70S ribosome. The chain is Small ribosomal subunit protein uS11 from Gloeobacter violaceus (strain ATCC 29082 / PCC 7421).